A 125-amino-acid polypeptide reads, in one-letter code: Small ribosomal subunit protein eS8 (125 aa).

Residues 1–23 show a composition bias toward basic residues; sequence MQFQGRSRRKYTGAKLKSARGKR. Positions 1–34 are disordered; the sequence is MQFQGRSRRKYTGAKLKSARGKRKFELGREPAAT.

The protein belongs to the eukaryotic ribosomal protein eS8 family. In terms of assembly, part of the 30S ribosomal subunit.

The polypeptide is Small ribosomal subunit protein eS8 (Methanococcoides burtonii (strain DSM 6242 / NBRC 107633 / OCM 468 / ACE-M)).